Reading from the N-terminus, the 459-residue chain is MKISVRNLEPTKVKLTVTVEPEELNPYLDAARKEIAKQVNVPGFRKGHVPGKIIDQRIGFAAVAGEAVNDAVPELYSKALDEKKIRPMAQPEFDVQDVPQSANDETKLKFTATVERRPDIELPEIDGLEIAISKPEVKDEDVDKRLETLRQRFGTLVGVDRPAAKGDFANIDLTAEIDGETVDSQEGVSYELGSNTMLDGLDEALDGLSAGEETTFEGTLEAGEHEGQKATVKVKVNSVKAEELPELDDEFASEASEFDTLDELKADIRKAAAQDAEGRQATEARDAFIAKLQEGLEIPVPKGVKANMVEEQLKGLTPDPEKATKEQKAQAEETVEKDLRDQMVLDALAEKLDVQVSQSDVFNFLASIAQQYGMDPNNFIQAIIKNGQLGSAVQEVARSKGLLAGMRAVKFTADGEVVDLSGFLGEAAEDEESESVEAASAAAAVADELSAKDDAKDAE.

A PPIase FKBP-type domain is found at 166–245 (GDFANIDLTA…VNSVKAEELP (80 aa)).

This sequence belongs to the FKBP-type PPIase family. Tig subfamily.

Its subcellular location is the cytoplasm. The enzyme catalyses [protein]-peptidylproline (omega=180) = [protein]-peptidylproline (omega=0). In terms of biological role, involved in protein export. Acts as a chaperone by maintaining the newly synthesized protein in an open conformation. Functions as a peptidyl-prolyl cis-trans isomerase. The protein is Trigger factor of Bifidobacterium longum subsp. infantis (strain ATCC 15697 / DSM 20088 / JCM 1222 / NCTC 11817 / S12).